The sequence spans 320 residues: Malate dehydrogenase (320 aa).

NAD(+)-binding positions include 10–15 (GSGMIG) and Asp-34. Substrate-binding residues include Arg-83 and Arg-89. NAD(+)-binding positions include Asn-96 and 119–121 (ITN). Residues Asn-121 and Arg-152 each contribute to the substrate site. His-176 (proton acceptor) is an active-site residue.

The protein belongs to the LDH/MDH superfamily. MDH type 3 family.

It carries out the reaction (S)-malate + NAD(+) = oxaloacetate + NADH + H(+). Functionally, catalyzes the reversible oxidation of malate to oxaloacetate. This Bartonella quintana (strain Toulouse) (Rochalimaea quintana) protein is Malate dehydrogenase.